We begin with the raw amino-acid sequence, 118 residues long: Cell division protein SepF (118 aa).

The tract at residues 1–12 (MGIMSKILGGGG) is important for localization in a ring-like structure at midcell.

Homodimer. Does not oligomerize. Interacts with FtsZ2.

The protein localises to the cytoplasm. Its function is as follows. Involved in cell division. Probably acts as a membrane anchor for FstZ2, tethering its filaments to the division site. May be involved in septum closure. This chain is Cell division protein SepF, found in Haloferax volcanii (strain ATCC 29605 / DSM 3757 / JCM 8879 / NBRC 14742 / NCIMB 2012 / VKM B-1768 / DS2) (Halobacterium volcanii).